The primary structure comprises 697 residues: Choline transporter-like protein 2 (697 aa).

Over Met1–Asp30 the chain is Cytoplasmic. Residues Ile31–Ala51 form a helical membrane-spanning segment. Residues Trp52–Trp226 lie on the Extracellular side of the membrane. 2 N-linked (GlcNAc...) asparagine glycosylation sites follow: Asn113 and Asn204. The chain crosses the membrane as a helical span at residues Tyr227–Leu247. The Cytoplasmic portion of the chain corresponds to Arg248–Phe249. Residues Leu250–Ile270 traverse the membrane as a helical segment. Residues Ala271–Trp309 are Extracellular-facing. An N-linked (GlcNAc...) asparagine glycan is attached at Asn287. The helical transmembrane segment at Leu310–Leu330 threads the bilayer. Over Arg331–Ser353 the chain is Cytoplasmic. The chain crosses the membrane as a helical span at residues Ser354–Val374. At Asn375 to Tyr435 the chain is on the extracellular side. N-linked (GlcNAc...) asparagine glycans are attached at residues Asn391 and Asn406. A helical membrane pass occupies residues Leu436–Ala456. Residues Leu457 to Ser498 lie on the Cytoplasmic side of the membrane. Residues Leu499 to Ile519 traverse the membrane as a helical segment. Residues Asp520–Asp593 lie on the Extracellular side of the membrane. Residues Phe594–Phe614 traverse the membrane as a helical segment. Residues Phe615–Tyr632 lie on the Cytoplasmic side of the membrane. Residues Trp633–Val653 traverse the membrane as a helical segment. Over Tyr654–Asn697 the chain is Extracellular.

It belongs to the CTL (choline transporter-like) family.

It is found in the cell membrane. The protein resides in the mitochondrion outer membrane. The catalysed reaction is choline(out) + n H(+)(in) = choline(in) + n H(+)(out). It carries out the reaction ethanolamine(out) + n H(+)(in) = ethanolamine(in) + n H(+)(out). Its function is as follows. Choline/H+ antiporter, mainly in mitochodria. Also acts as a low-affinity ethanolamine/H+ antiporter, regulating the supply of extracellular ethanolamine (Etn) for the CDP-Etn pathway, redistribute intracellular Etn and balance the CDP-Cho and CDP-Etn arms of the Kennedy pathway. In Danio rerio (Zebrafish), this protein is Choline transporter-like protein 2 (slc44a2).